We begin with the raw amino-acid sequence, 141 residues long: Transmembrane protein 216 (141 aa).

The next 4 membrane-spanning stretches (helical) occupy residues 15–35 (ILFFLNGWYYATYFLLELLIF), 49–69 (LVLDVVMLLLYLGIEVIRLFF), 82–102 (LGISVALTFPSAMMASYYLLL), and 115–135 (SILLFFCGSELLLEMLTLATF).

As to quaternary structure, part of the tectonic-like complex (also named B9 complex). Interacts with TMEM107.

The protein resides in the membrane. It localises to the cytoplasm. The protein localises to the cytoskeleton. Its subcellular location is the cilium basal body. Part of the tectonic-like complex which is required for tissue-specific ciliogenesis and may regulate ciliary membrane composition. The polypeptide is Transmembrane protein 216 (Tmem216) (Rattus norvegicus (Rat)).